A 275-amino-acid chain; its full sequence is Lycopene elongase/hydratase (275 aa).

The next 9 helical transmembrane spans lie at 13-33, 38-58, 84-104, 107-127, 134-154, 160-180, 203-223, 225-245, and 253-273; these read FWLY…TTVG, APAV…LYGI, AAVA…AAPL, EAWP…APPL, VLDS…YAGV, PLLA…FSAI, ALAY…LVDV, FGLL…LQVA, and YPAV…WGVV.

This sequence belongs to the UbiA prenyltransferase family.

Its subcellular location is the cell membrane. The catalysed reaction is all-trans-lycopene + dimethylallyl diphosphate + H2O = dihydroisopentenyldehydrorhodopin + diphosphate. It carries out the reaction isopentenyldehydrorhodopin + dimethylallyl diphosphate + H2O = dihydrobisanhydrobacterioruberin + diphosphate. The protein operates within carotenoid biosynthesis. Its activity is regulated as follows. Inhibited by bacterioopsin. In terms of biological role, involved in the biosynthesis of the acyclic C50 carotenoid bacterioruberin (BR). Acts as a bifunctional elongase/hydratase that catalyzes the elongation of lycopene by attaching a C(5) isoprene unit at C-2, as well as the hydroxylation of the previous end of the molecule. The enzyme acts at both ends of the substrate, and catalyzes the conversion of lycopene to the C(45) intermediate dihydroisopentenyldehydrorhodopin (DH-IDR) and the conversion of isopentenyldehydrorhodopin (IDR) to the C(50) carotenoid dihydrobisanhydrobacterioruberin (DH-BABR). Can also catalyze the conversion of lycopene to tetrahydrobisanhydrobacterioruberin (TH-BABR). The protein is Lycopene elongase/hydratase of Halobacterium salinarum (strain ATCC 700922 / JCM 11081 / NRC-1) (Halobacterium halobium).